Consider the following 295-residue polypeptide: Aquaporin-9 (295 aa).

The Cytoplasmic portion of the chain corresponds to 1–24 (MQPEGAEKGKSFKQRLVLKSSLAK). A helical transmembrane segment spans residues 25–43 (ETLSEFLGTFILIVLGCGC). The Extracellular segment spans residues 44-57 (VAQAILSRGRFGGV). A helical membrane pass occupies residues 58 to 77 (ITINVGFSMAVAMAIYVAGG). Topologically, residues 78 to 79 (VS) are cytoplasmic. Positions 80–92 (GGHINPAVSLAMC) form an intramembrane region, discontinuously helical. The short motif at 84-86 (NPA) is the NPA 1 element. Topologically, residues 93-98 (LFGRMK) are cytoplasmic. Residues 99–123 (WFKLPFYVGAQFLGAFVGAATVFGI) form a helical membrane-spanning segment. The Extracellular portion of the chain corresponds to 124 to 160 (YYDGLMSFAGGKLLIVGENATAHIFATYPAPYLSLAN). Residues 161–178 (AFADQVVATMILLIIVFA) form a helical membrane-spanning segment. Residues 179-190 (IFDSRNLGAPRG) are Cytoplasmic-facing. The chain crosses the membrane as a helical span at residues 191-207 (LEPIAIGLLIIVIASSL). Over 208–210 (GLN) the chain is Extracellular. An intramembrane region (discontinuously helical) is located at residues 211–225 (SGCAMNPARDLSPRL). The NPA 2 signature appears at 216–218 (NPA). Over 226 to 243 (FTALAGWGFEVFRAGNNF) the chain is Extracellular. Residues 244–264 (WWIPVVGPLVGAVIGGLIYVL) form a helical membrane-spanning segment. Over 265–295 (VIEIHHPEPDSVFKTEQSEDKPEKYELSVIM) the chain is Cytoplasmic.

This sequence belongs to the MIP/aquaporin (TC 1.A.8) family. Homotetramer; each monomer provides an independent glycerol/water pore. Highly expressed in peripheral leukocytes. Also expressed in liver, lung, and spleen.

Its subcellular location is the cell membrane. The protein localises to the basolateral cell membrane. The catalysed reaction is glycerol(in) = glycerol(out). It carries out the reaction H2O(in) = H2O(out). It catalyses the reaction urea(in) = urea(out). The enzyme catalyses (S)-lactate(in) = (S)-lactate(out). The catalysed reaction is NH4(+)(in) = NH4(+)(out). It carries out the reaction uracil(in) = uracil(out). It catalyses the reaction adenine(out) = adenine(in). The enzyme catalyses 3-hydroxybutanoate(in) = 3-hydroxybutanoate(out). The catalysed reaction is D-sorbitol(in) = D-sorbitol(out). It carries out the reaction D-mannitol(in) = D-mannitol(out). It catalyses the reaction H2O2(out) = H2O2(in). The enzyme catalyses arsenite(in) = arsenite(out). The catalysed reaction is selenite(in) = selenite(out). Its function is as follows. Aquaglyceroporins form homotetrameric transmembrane channels, with each monomer independently mediating glycerol and water transport across the plasma membrane along their osmotic gradient. AQP9 is the primary route for glycerol uptake in hepatocytes, supporting hepatic gluconeogenesis. It exhibits broad specificity and may transport various small, non-charged solutes, including carbamides, polyols, purines, and pyrimidines. AQP9 may also facilitate hepatic urea extrusion. Due to its permeability to lactate, AQP9 might participate in the astrocyte-to-neuron lactate shuttle, supplying neurons with energy. Additionally, AQP9 is permeable to arsenite, contributing to arsenic excretion by the liver and providing partial protection against arsenic toxicity. It is also permeable to H2O2 in vivo. Could also be permeable to ammonium. This chain is Aquaporin-9, found in Homo sapiens (Human).